Here is a 199-residue protein sequence, read N- to C-terminus: Large ribosomal subunit protein mL51 (199 aa).

A mitochondrion-targeting transit peptide spans 1–15; sequence MNSNSLSRFTSIVRT.

Belongs to the mitochondrion-specific ribosomal protein mL51 family. As to quaternary structure, component of the mitochondrial ribosome large subunit (39S) which comprises a 16S rRNA and about 50 distinct proteins.

Its subcellular location is the mitochondrion. The protein is Large ribosomal subunit protein mL51 (mrpl-51) of Caenorhabditis elegans.